A 312-amino-acid chain; its full sequence is Deoxyribonuclease-1-like 1 (312 aa).

Positions 1–35 (MPSGQPVFPRRVPDAYIAMRGLVVASLLILLVGGT) are cleaved as a signal peptide. The N-linked (GlcNAc...) asparagine glycan is linked to Asn102. Glu113 is an active-site residue. An N-linked (GlcNAc...) asparagine glycan is attached at Asn133. His164 is an active-site residue. A disulfide bridge connects residues Cys203 and Cys240. The N-linked (GlcNAc...) asparagine glycan is linked to Asn239.

It belongs to the DNase I family.

The protein resides in the endoplasmic reticulum. The protein is Deoxyribonuclease-1-like 1 (Dnase1l1) of Rattus norvegicus (Rat).